Here is a 960-residue protein sequence, read N- to C-terminus: RNA polymerase II subunit A C-terminal domain phosphatase (960 aa).

Residue M1 is modified to N-acetylmethionine. The FCP1 homology domain occupies H178–R341. Residues A331 to L580 form a disordered region. A compositionally biased stretch (polar residues) spans P439–A448. Positions L453–S463 are enriched in acidic residues. A Phosphoserine modification is found at S530. Residues E547 to V556 are compositionally biased toward polar residues. The segment covering V566 to D578 has biased composition (acidic residues). The BRCT domain occupies L619–L718. Phosphoserine occurs at positions 664 and 730. K770 is modified (N6-acetyllysine). Disordered stretches follow at residues K770–A834 and D854–M948. Residues S830, S860, and S863 each carry the phosphoserine modification. Residues D854–D864 are compositionally biased toward acidic residues. The span at I865–P881 shows a compositional bias: basic and acidic residues. The segment covering S934–E947 has biased composition (acidic residues).

As to quaternary structure, homodimer. Interacts with GTF2F1. Interacts with WDR77, SNRPB and SNRNP70. Phosphorylated. In the presence of TFIIF, the phosphorylated form has an increased CTD phosphatase activity. The phosphorylation is required for the physical interaction with GTF2F1.

The protein localises to the nucleus. Its subcellular location is the cytoplasm. The protein resides in the cytoskeleton. It localises to the microtubule organizing center. It is found in the centrosome. The protein localises to the spindle. Its subcellular location is the spindle pole. The protein resides in the midbody. It catalyses the reaction O-phospho-L-seryl-[protein] + H2O = L-seryl-[protein] + phosphate. It carries out the reaction O-phospho-L-threonyl-[protein] + H2O = L-threonyl-[protein] + phosphate. Functionally, processively dephosphorylates 'Ser-2' and 'Ser-5' of the heptad repeats YSPTSPS in the C-terminal domain of the largest RNA polymerase II subunit. This promotes the activity of RNA polymerase II. Plays a role in the exit from mitosis by dephosphorylating crucial mitotic substrates (USP44, CDC20 and WEE1) that are required for M-phase-promoting factor (MPF)/CDK1 inactivation. The protein is RNA polymerase II subunit A C-terminal domain phosphatase (Ctdp1) of Mus musculus (Mouse).